Here is a 517-residue protein sequence, read N- to C-terminus: UDP-N-acetylmuramyl-tripeptide synthetase (517 aa).

Residue Thr-48 participates in UDP-N-acetyl-alpha-D-muramoyl-L-alanyl-D-glutamate binding. 125–131 (GTKGKTT) serves as a coordination point for ATP. UDP-N-acetyl-alpha-D-muramoyl-L-alanyl-D-glutamate is bound by residues 169 to 170 (TT), Ser-196, and Arg-204. The residue at position 238 (Lys-238) is an N6-carboxylysine.

It belongs to the MurCDEF family. MurE subfamily. Carboxylation is probably crucial for Mg(2+) binding and, consequently, for the gamma-phosphate positioning of ATP.

The protein localises to the cytoplasm. Its pathway is cell wall biogenesis; peptidoglycan biosynthesis. Its function is as follows. Catalyzes the addition of an amino acid to the nucleotide precursor UDP-N-acetylmuramoyl-L-alanyl-D-glutamate (UMAG) in the biosynthesis of bacterial cell-wall peptidoglycan. The chain is UDP-N-acetylmuramyl-tripeptide synthetase from Bifidobacterium longum (strain NCC 2705).